The primary structure comprises 99 residues: Plastocyanin (99 aa).

The Plastocyanin-like domain maps to 1–99; it reads IEIKLGGDDG…AGMVGKVTVQ (99 aa). His-37, Cys-84, His-87, and Met-92 together coordinate Cu cation.

This sequence belongs to the plastocyanin family. Cu(2+) is required as a cofactor.

It is found in the plastid. It localises to the chloroplast thylakoid membrane. Functionally, participates in electron transfer between P700 and the cytochrome b6-f complex in photosystem I. The sequence is that of Plastocyanin (PETE) from Rumex obtusifolius (Bitter dock).